The primary structure comprises 398 residues: Selenide, water dikinase (398 aa).

Positions Met-1 to Thr-21 are disordered. Cys-46 is a catalytic residue. ATP-binding positions include Lys-49, Gly-72–Asp-74, Asp-97, Asp-120, and Gly-171–Thr-174. Asp-74 serves as a coordination point for Mg(2+). Asp-120 provides a ligand contact to Mg(2+). Mg(2+) is bound at residue Asp-278.

Belongs to the selenophosphate synthase 1 family. Class I subfamily. As to quaternary structure, homodimer. Requires Mg(2+) as cofactor.

The catalysed reaction is hydrogenselenide + ATP + H2O = selenophosphate + AMP + phosphate + 2 H(+). Functionally, synthesizes selenophosphate from selenide and ATP. The polypeptide is Selenide, water dikinase (Leishmania major).